The sequence spans 922 residues: Band 3 anion transport protein (922 aa).

2 disordered regions span residues 1 to 36 (MEGPGQDTEDALRRSLDPEGYEDTKGSRTSLGTMSN) and 355 to 389 (QHPDTVRSPGGPTAPKDTGDKGQAPQDDDPLLRTR). Residues 1–416 (MEGPGQDTED…LSDIRDALNP (416 aa)) are Cytoplasmic-facing. Basic and acidic residues predominate over residues 10-26 (DALRRSLDPEGYEDTKG). The span at 27-36 (SRTSLGTMSN) shows a compositional bias: polar residues. Residues 417–440 (QCLAAVIFIYFAALSPAITFGGLL) traverse the membrane as a helical segment. The Extracellular segment spans residues 441–448 (GEKTRGMM). Residues 449–469 (GVSELLLSTSVQCLLFSLLSA) traverse the membrane as a helical segment. The Cytoplasmic segment spans residues 470–472 (QPL). A discontinuously helical transmembrane segment spans residues 473–489 (LVVGFSGPLLVFEEAFF). Topologically, residues 490–498 (RFCEDHGLE) are extracellular. The helical transmembrane segment at 499 to 519 (YIVGRVWIGFWLILLVLLVVA) threads the bilayer. The Cytoplasmic portion of the chain corresponds to 520-531 (CEGTVLVRYLSR). A helical transmembrane segment spans residues 532–554 (YTQEIFSFLISLIFIYETFAKLV). At 555-581 (TIFEAHPLQQSYDTDVSTEPSVPKPNT) the chain is on the extracellular side. A helical transmembrane segment spans residues 582-602 (ALLSLVLMAGTFFLALFLRQF). At 603 to 613 (KNSVFLPGKVR) the chain is on the cytoplasmic side. The helical transmembrane segment at 614–634 (RLIGDFGVPISIFVMALADFF) threads the bilayer. The Extracellular segment spans residues 635–674 (IKDTYTQKLKVPRGLEVTNGTARGWFIHPMGSATPFPIWM). An N-linked (GlcNAc...) asparagine glycan is attached at asparagine 653. Residues 675 to 695 (MFASPVPALLVFILIFLETQI) form a helical membrane-spanning segment. Over 696–711 (TTLIVSKPERKLVKGS) the chain is Cytoplasmic. A helical membrane pass occupies residues 712–730 (GFHLDLLLIVAMGGLAALF). The chain crosses the membrane as a discontinuously helical span at residues 731 to 748 (GMPWLSATTVRTITHANA). Topologically, residues 749-771 (LTVVGKSAVPGERAHIVEVKEQR) are cytoplasmic. The next 2 helical transmembrane spans lie at 772–792 (LSGLLVAVLIGVSILMEPILK) and 793–811 (YIPLAVLFGIFLYMGVTSL). Residues 812 to 849 (FGIQLFDRILLLLMPPKYHPKEPYVTRVKTWRITSSPL) are Cytoplasmic-facing. An intramembrane region (discontinuously helical) is located at residues 850–880 (TQILVVALLWGVKVSPASLRCPFVLVLTVPL). At 881 to 922 (RRLLLPRIFSEIELKCLDTDDAVVTFEEAEGQDVYNEVQMPS) the chain is on the cytoplasmic side.

This sequence belongs to the anion exchanger (TC 2.A.31) family. As to quaternary structure, a dimer in solution, it spans the membrane asymmetrically and appears to be tetrameric. As to expression, erythrocytes.

The protein localises to the cell membrane. Its subcellular location is the basolateral cell membrane. It catalyses the reaction hydrogencarbonate(in) + chloride(out) = hydrogencarbonate(out) + chloride(in). In terms of biological role, functions both as a transporter that mediates electroneutral anion exchange across the cell membrane and as a structural protein. Major integral membrane glycoprotein of the erythrocyte membrane; required for normal flexibility and stability of the erythrocyte membrane and for normal erythrocyte shape via the interactions of its cytoplasmic domain with cytoskeletal proteins, glycolytic enzymes, and hemoglobin. Functions as a transporter that mediates the 1:1 exchange of inorganic anions across the erythrocyte membrane. Mediates chloride-bicarbonate exchange in the kidney, and is required for normal acidification of the urine. The polypeptide is Band 3 anion transport protein (SLC4A1) (Gallus gallus (Chicken)).